The primary structure comprises 178 residues: Mediator of RNA polymerase II transcription subunit 30 (178 aa).

The segment at 1–22 (MSTPPLAASGMAPGPFAGPQAQ) is disordered. Position 2 is an N-acetylserine (Ser2). Residues 10 to 22 (GMAPGPFAGPQAQ) are compositionally biased toward low complexity. Coiled coils occupy residues 70-94 (TYQDRLTKLQDNLRQLSVLFRKLRL) and 133-173 (RFAS…INAM).

The protein belongs to the Mediator complex subunit 30 family. In terms of assembly, component of the Mediator complex, which is composed of MED1, MED4, MED6, MED7, MED8, MED9, MED10, MED11, MED12, MED13, MED13L, MED14, MED15, MED16, MED17, MED18, MED19, MED20, MED21, MED22, MED23, MED24, MED25, MED26, MED27, MED29, MED30, MED31, CCNC, CDK8 and CDC2L6/CDK11. The MED12, MED13, CCNC and CDK8 subunits form a distinct module termed the CDK8 module. Mediator containing the CDK8 module is less active than Mediator lacking this module in supporting transcriptional activation. Individual preparations of the Mediator complex lacking one or more distinct subunits have been variously termed ARC, CRSP, DRIP, PC2, SMCC and TRAP. In terms of tissue distribution, expressed in brain, heart, kidney, liver, lung, pancreas, placenta and skeletal muscle.

The protein resides in the nucleus. In terms of biological role, component of the Mediator complex, a coactivator involved in the regulated transcription of nearly all RNA polymerase II-dependent genes. Mediator functions as a bridge to convey information from gene-specific regulatory proteins to the basal RNA polymerase II transcription machinery. Mediator is recruited to promoters by direct interactions with regulatory proteins and serves as a scaffold for the assembly of a functional preinitiation complex with RNA polymerase II and the general transcription factors. This Homo sapiens (Human) protein is Mediator of RNA polymerase II transcription subunit 30 (MED30).